The primary structure comprises 480 residues: Aspartyl/glutamyl-tRNA(Asn/Gln) amidotransferase subunit B (480 aa).

The protein belongs to the GatB/GatE family. GatB subfamily. As to quaternary structure, heterotrimer of A, B and C subunits.

The enzyme catalyses L-glutamyl-tRNA(Gln) + L-glutamine + ATP + H2O = L-glutaminyl-tRNA(Gln) + L-glutamate + ADP + phosphate + H(+). The catalysed reaction is L-aspartyl-tRNA(Asn) + L-glutamine + ATP + H2O = L-asparaginyl-tRNA(Asn) + L-glutamate + ADP + phosphate + 2 H(+). Allows the formation of correctly charged Asn-tRNA(Asn) or Gln-tRNA(Gln) through the transamidation of misacylated Asp-tRNA(Asn) or Glu-tRNA(Gln) in organisms which lack either or both of asparaginyl-tRNA or glutaminyl-tRNA synthetases. The reaction takes place in the presence of glutamine and ATP through an activated phospho-Asp-tRNA(Asn) or phospho-Glu-tRNA(Gln). In Streptococcus agalactiae serotype Ia (strain ATCC 27591 / A909 / CDC SS700), this protein is Aspartyl/glutamyl-tRNA(Asn/Gln) amidotransferase subunit B.